Here is a 173-residue protein sequence, read N- to C-terminus: Ribosome maturation factor RimP (173 aa).

It belongs to the RimP family.

The protein resides in the cytoplasm. Its function is as follows. Required for maturation of 30S ribosomal subunits. The sequence is that of Ribosome maturation factor RimP from Chlorobaculum tepidum (strain ATCC 49652 / DSM 12025 / NBRC 103806 / TLS) (Chlorobium tepidum).